Here is a 213-residue protein sequence, read N- to C-terminus: ATP synthase subunit delta 2 (213 aa).

Belongs to the ATPase delta chain family. In terms of assembly, F-type ATPases have 2 components, F(1) - the catalytic core - and F(0) - the membrane proton channel. F(1) has five subunits: alpha(3), beta(3), gamma(1), delta(1), epsilon(1). F(0) has three main subunits: a(1), b(2) and c(10-14). The alpha and beta chains form an alternating ring which encloses part of the gamma chain. F(1) is attached to F(0) by a central stalk formed by the gamma and epsilon chains, while a peripheral stalk is formed by the delta and b chains.

It is found in the cell inner membrane. Functionally, f(1)F(0) ATP synthase produces ATP from ADP in the presence of a proton or sodium gradient. F-type ATPases consist of two structural domains, F(1) containing the extramembraneous catalytic core and F(0) containing the membrane proton channel, linked together by a central stalk and a peripheral stalk. During catalysis, ATP synthesis in the catalytic domain of F(1) is coupled via a rotary mechanism of the central stalk subunits to proton translocation. In terms of biological role, this protein is part of the stalk that links CF(0) to CF(1). It either transmits conformational changes from CF(0) to CF(1) or is implicated in proton conduction. The chain is ATP synthase subunit delta 2 from Brachyspira hyodysenteriae (strain ATCC 49526 / WA1).